Reading from the N-terminus, the 198-residue chain is Na(+)-translocating NADH-quinone reductase subunit E (198 aa).

The next 6 membrane-spanning stretches (helical) occupy residues 11-31 (SVFIENMALSFFLGMCTFLAV), 35-55 (VSTAFGLGIAVIVVLGISVPV), 77-97 (FLNFITFIGVIAALVQILEMF), 110-130 (GIFLPLITVNCAIFGGVSFMV), 140-160 (VVYGIGAGTGWMLAIVALAGL), and 176-196 (LGITFITVGLMALGFMSFSGI).

The protein belongs to the NqrDE/RnfAE family. As to quaternary structure, composed of six subunits; NqrA, NqrB, NqrC, NqrD, NqrE and NqrF.

The protein localises to the cell inner membrane. The enzyme catalyses a ubiquinone + n Na(+)(in) + NADH + H(+) = a ubiquinol + n Na(+)(out) + NAD(+). NQR complex catalyzes the reduction of ubiquinone-1 to ubiquinol by two successive reactions, coupled with the transport of Na(+) ions from the cytoplasm to the periplasm. NqrA to NqrE are probably involved in the second step, the conversion of ubisemiquinone to ubiquinol. The protein is Na(+)-translocating NADH-quinone reductase subunit E of Mannheimia succiniciproducens (strain KCTC 0769BP / MBEL55E).